Here is a 502-residue protein sequence, read N- to C-terminus: Histidine--tRNA ligase (502 aa).

The protein belongs to the class-II aminoacyl-tRNA synthetase family. In terms of assembly, homodimer.

Its subcellular location is the cytoplasm. It carries out the reaction tRNA(His) + L-histidine + ATP = L-histidyl-tRNA(His) + AMP + diphosphate + H(+). This is Histidine--tRNA ligase (hisS) from Brucella suis biovar 1 (strain 1330).